Reading from the N-terminus, the 301-residue chain is Sulfate adenylyltransferase subunit 2 (301 aa).

Residues arginine 282–phenylalanine 301 form a disordered region.

It belongs to the PAPS reductase family. CysD subfamily. In terms of assembly, heterodimer composed of CysD, the smaller subunit, and CysN.

The enzyme catalyses sulfate + ATP + H(+) = adenosine 5'-phosphosulfate + diphosphate. Its pathway is sulfur metabolism; hydrogen sulfide biosynthesis; sulfite from sulfate: step 1/3. Functionally, with CysN forms the ATP sulfurylase (ATPS) that catalyzes the adenylation of sulfate producing adenosine 5'-phosphosulfate (APS) and diphosphate, the first enzymatic step in sulfur assimilation pathway. APS synthesis involves the formation of a high-energy phosphoric-sulfuric acid anhydride bond driven by GTP hydrolysis by CysN coupled to ATP hydrolysis by CysD. This Chelativorans sp. (strain BNC1) protein is Sulfate adenylyltransferase subunit 2.